The following is a 335-amino-acid chain: ETS translocation variant 2 (335 aa).

Disordered stretches follow at residues 94-138 (DPWS…SWSH) and 201-220 (GHQS…SDRA). Polar residues predominate over residues 205–220 (PAFTTPSKSNKQSDRA). The ETS DNA-binding region spans 234–314 (IQLWQFLLEL…GGRKYTYRFG (81 aa)).

This sequence belongs to the ETS family. In terms of tissue distribution, testis.

The protein localises to the nucleus. In terms of biological role, binds to DNA sequences containing the consensus pentanucleotide 5'-CGGA[AT]-3'. The protein is ETS translocation variant 2 (Etv2) of Mus musculus (Mouse).